The primary structure comprises 369 residues: Phospho-N-acetylmuramoyl-pentapeptide-transferase (369 aa).

A run of 10 helical transmembrane segments spans residues 2 to 22, 54 to 74, 80 to 100, 113 to 133, 158 to 178, 195 to 215, 241 to 261, 268 to 288, 293 to 313, and 347 to 367; these read IAIL…TPFF, GLVI…FLGL, GLLV…DDIL, FYKV…TFLV, ALFS…LLWI, LDGL…VIGF, PLDM…FLWW, IMMG…LSIL, LLFL…ILQI, and FWII…ADWL.

Belongs to the glycosyltransferase 4 family. MraY subfamily. Mg(2+) is required as a cofactor.

The protein resides in the cell membrane. The catalysed reaction is UDP-N-acetyl-alpha-D-muramoyl-L-alanyl-gamma-D-glutamyl-meso-2,6-diaminopimeloyl-D-alanyl-D-alanine + di-trans,octa-cis-undecaprenyl phosphate = di-trans,octa-cis-undecaprenyl diphospho-N-acetyl-alpha-D-muramoyl-L-alanyl-D-glutamyl-meso-2,6-diaminopimeloyl-D-alanyl-D-alanine + UMP. The protein operates within cell wall biogenesis; peptidoglycan biosynthesis. Functionally, catalyzes the initial step of the lipid cycle reactions in the biosynthesis of the cell wall peptidoglycan: transfers peptidoglycan precursor phospho-MurNAc-pentapeptide from UDP-MurNAc-pentapeptide onto the lipid carrier undecaprenyl phosphate, yielding undecaprenyl-pyrophosphoryl-MurNAc-pentapeptide, known as lipid I. This chain is Phospho-N-acetylmuramoyl-pentapeptide-transferase, found in Tropheryma whipplei (strain Twist) (Whipple's bacillus).